The following is a 588-amino-acid chain: MIGKVVVSVASILLIVGVAIGVVAFINKNGDANLSPQMKAVQGICQSTSDKASCVKTLEPVKSEDPNKLIKAFMLATKDELTKSSNFTGQTEVNMGSSISPNNKAVLDYCKRVFMYALEDLATIIEEMGEDLSQIGSKIDQLKQWLIGVYNYQTDCLDDIEEDDLRKAIGEGIANSKILTTNAIDIFHTVVSAMAKINNKVDDLKNMTGGIPTPGAPPVVDESPVADPDGPARRLLEDIDETGIPTWVSGADRKLMAKAGRGRRGGRGGGARVRTNFVVAKDGSGQFKTVQQAVDACPENNRGRCIIYIKAGLYREQVIIPKKKNNIFMFGDGARKTVISYNRSVALSRGTTTSLSATVQVESEGFMAKWMGFKNTAGPMGHQAAAIRVNGDRAVIFNCRFDGYQDTLYVNNGRQFYRNCVVSGTVDFIFGKSATVIQNTLIVVRKGSKGQYNTVTADGNELGLGMKIGIVLQNCRIVPDRKLTPERLTVATYLGRPWKKFSTTVIMSTEMGDLIRPEGWKIWDGESFHKSCRYVEYNNRGPGAFANRRVNWAKVARSAAEVNGFTAANWLGPINWIQEANVPVTIGL.

The signal sequence occupies residues 1-24; it reads MIGKVVVSVASILLIVGVAIGVVA. N-linked (GlcNAc...) asparagine glycans are attached at residues asparagine 86, asparagine 206, and asparagine 342. Positions 353 and 383 each coordinate substrate. Aspartate 406 functions as the Proton donor in the catalytic mechanism. Aspartate 427 (nucleophile) is an active-site residue. Substrate contacts are provided by arginine 496 and tryptophan 498.

It in the N-terminal section; belongs to the PMEI family. The protein in the C-terminal section; belongs to the pectinesterase family. In terms of tissue distribution, expressed in pollen grains and pollen tubes.

Its subcellular location is the secreted. It localises to the cell wall. It carries out the reaction [(1-&gt;4)-alpha-D-galacturonosyl methyl ester](n) + n H2O = [(1-&gt;4)-alpha-D-galacturonosyl](n) + n methanol + n H(+). The protein operates within glycan metabolism; pectin degradation; 2-dehydro-3-deoxy-D-gluconate from pectin: step 1/5. In terms of biological role, acts in the modification of cell walls via demethylesterification of cell wall pectin. Plays an important role in growth of pollen tubes in female floral tissues, possibly via enhancing the interaction between the pollen tube and female floral tissues by modification of the cell walls. The polypeptide is Pectinesterase 4 (PME4) (Arabidopsis thaliana (Mouse-ear cress)).